A 194-amino-acid polypeptide reads, in one-letter code: Prostaglandin-H2 D-isomerase (194 aa).

A signal peptide spans 1–24 (MAASHTLWMGLVLLGVLGVLQTRA). Position 25 is a pyrrolidone carboxylic acid (Gln-25). N-linked (GlcNAc...) asparagine glycosylation occurs at Asn-51. Cys-65 serves as the catalytic Nucleophile. A glycan (N-linked (GlcNAc...) asparagine) is linked at Asn-78. A disulfide bridge connects residues Cys-89 and Cys-189.

The protein belongs to the calycin superfamily. Lipocalin family. As to quaternary structure, monomer. In the male reproductive system, it is expressed in the testis and epididymis, and is secreted into the seminal fluid.

Its subcellular location is the rough endoplasmic reticulum. It localises to the nucleus membrane. The protein localises to the golgi apparatus. It is found in the cytoplasm. The protein resides in the perinuclear region. Its subcellular location is the secreted. The catalysed reaction is prostaglandin H2 = prostaglandin D2. Catalyzes the conversion of PGH2 to PGD2, a prostaglandin involved in smooth muscle contraction/relaxation and a potent inhibitor of platelet aggregation. Involved in a variety of CNS functions, such as sedation, NREM sleep and PGE2-induced allodynia, and may have an anti-apoptotic role in oligodendrocytes. Binds small non-substrate lipophilic molecules, including biliverdin, bilirubin, retinal, retinoic acid and thyroid hormone, and may act as a scavenger for harmful hydrophobic molecules and as a secretory retinoid and thyroid hormone transporter. Possibly involved in development and maintenance of the blood-brain, blood-retina, blood-aqueous humor and blood-testis barrier. It is likely to play important roles in both maturation and maintenance of the central nervous system and male reproductive system. Involved in PLA2G3-dependent maturation of mast cells. PLA2G3 is secreted by immature mast cells and acts on nearby fibroblasts upstream to PTDGS to synthesize PGD2, which in turn promotes mast cell maturation and degranulation via PTGDR. The chain is Prostaglandin-H2 D-isomerase (PTGDS) from Equus caballus (Horse).